We begin with the raw amino-acid sequence, 179 residues long: UPF0227 protein PM0825 (179 aa).

It belongs to the UPF0227 family.

This is UPF0227 protein PM0825 from Pasteurella multocida (strain Pm70).